A 441-amino-acid chain; its full sequence is tRNA-2-methylthio-N(6)-dimethylallyladenosine synthase (441 aa).

The MTTase N-terminal domain occupies 5–121 (KKLYLETFGC…LQGMVAAAEE (117 aa)). 6 residues coordinate [4Fe-4S] cluster: C14, C50, C84, C159, C163, and C166. The region spanning 145–375 (AEGGVTRFVT…QAAQKKTTLA (231 aa)) is the Radical SAM core domain. Residues 378-440 (RSLEGTVQKV…QTLLKGEIVH (63 aa)) form the TRAM domain.

Belongs to the methylthiotransferase family. MiaB subfamily. Monomer. Requires [4Fe-4S] cluster as cofactor.

The protein resides in the cytoplasm. It catalyses the reaction N(6)-dimethylallyladenosine(37) in tRNA + (sulfur carrier)-SH + AH2 + 2 S-adenosyl-L-methionine = 2-methylsulfanyl-N(6)-dimethylallyladenosine(37) in tRNA + (sulfur carrier)-H + 5'-deoxyadenosine + L-methionine + A + S-adenosyl-L-homocysteine + 2 H(+). In terms of biological role, catalyzes the methylthiolation of N6-(dimethylallyl)adenosine (i(6)A), leading to the formation of 2-methylthio-N6-(dimethylallyl)adenosine (ms(2)i(6)A) at position 37 in tRNAs that read codons beginning with uridine. In Citrifermentans bemidjiense (strain ATCC BAA-1014 / DSM 16622 / JCM 12645 / Bem) (Geobacter bemidjiensis), this protein is tRNA-2-methylthio-N(6)-dimethylallyladenosine synthase.